The primary structure comprises 220 residues: Translation initiation factor 6 (220 aa).

It belongs to the eIF-6 family.

In terms of biological role, binds to the 50S ribosomal subunit and prevents its association with the 30S ribosomal subunit to form the 70S initiation complex. The sequence is that of Translation initiation factor 6 from Methanoculleus marisnigri (strain ATCC 35101 / DSM 1498 / JR1).